The following is a 213-amino-acid chain: Neuromodulin (213 aa).

The interval 1–213 is disordered; sequence MLCCIRRTKP…AEEAGKDQNV (213 aa). S-palmitoyl cysteine attachment occurs at residues Cys-3 and Cys-4. The span at 9-33 shows a compositional bias: basic and acidic residues; sequence KPVEKNEEADQEIKQDGTKPEENAH. An IQ domain is found at 32-61; the sequence is AHKAATKIQASFRGHITRKKMKDEDKDGEN. Residues 57–73 are compositionally biased toward acidic residues; that stretch reads KDGENDTAPDESAETEE. Over residues 74-86 the composition is skewed to basic and acidic residues; the sequence is KEERVSPSEEKPV. Over residues 102–122 the composition is skewed to low complexity; the sequence is PNSPAAEAPPTAATDSAPSDT. The span at 157 to 169 shows a compositional bias: acidic residues; it reads EKEEEEEEEEEEE. Basic and acidic residues predominate over residues 191–213; the sequence is QTDKKEALDDSKPAEEAGKDQNV.

This sequence belongs to the neuromodulin family. Binds calmodulin with a greater affinity in the absence of Ca(2+) than in its presence. In terms of processing, palmitoylated. Palmitoylation is essential for plasma membrane association.

The protein resides in the cell membrane. It is found in the cell projection. Its subcellular location is the growth cone membrane. It localises to the synapse. The protein localises to the filopodium membrane. Functionally, this protein is associated with nerve growth. It is a major component of the motile 'growth cones' that form the tips of elongating axons. Plays a role in axonal and dendritic filopodia induction. The protein is Neuromodulin (gap43) of Carassius auratus (Goldfish).